The chain runs to 371 residues: Transcription termination/antitermination protein NusA (371 aa).

The S1 motif domain maps to 135–199 (EDIMTGIVQR…KGPQIYVSRT (65 aa)). In terms of domain architecture, KH spans 301 to 367 (EKATTVIVPD…EPLFTEPETA (67 aa)). The segment at 347–371 (GIYPRELEEDDEPLFTEPETAESDE) is disordered. Positions 353-371 (LEEDDEPLFTEPETAESDE) are enriched in acidic residues.

This sequence belongs to the NusA family. In terms of assembly, monomer. Binds directly to the core enzyme of the DNA-dependent RNA polymerase and to nascent RNA.

Its subcellular location is the cytoplasm. Functionally, participates in both transcription termination and antitermination. This chain is Transcription termination/antitermination protein NusA, found in Bacillus subtilis (strain 168).